The following is a 162-amino-acid chain: Nucleotide-binding protein CMM_2802 (162 aa).

Belongs to the YajQ family.

In terms of biological role, nucleotide-binding protein. This is Nucleotide-binding protein CMM_2802 from Clavibacter michiganensis subsp. michiganensis (strain NCPPB 382).